A 146-amino-acid chain; its full sequence is Large ribosomal subunit protein uL15 (146 aa).

The tract at residues 1-46 (MKLHELQPAPGSRKKAVRVGRGIGSGNGKTAGRGHKGQKARSGGGV) is disordered. Residues 21–31 (RGIGSGNGKTA) show a composition bias toward gly residues.

Belongs to the universal ribosomal protein uL15 family. Part of the 50S ribosomal subunit.

In terms of biological role, binds to the 23S rRNA. The protein is Large ribosomal subunit protein uL15 of Geobacillus thermodenitrificans (strain NG80-2).